The primary structure comprises 40 residues: Alpha-1B-glycoprotein (40 aa).

An N-linked (GlcNAc...) asparagine glycan is attached at N23.

In terms of assembly, interacts with CRISP3. Plasma.

Its subcellular location is the secreted. In Sus scrofa (Pig), this protein is Alpha-1B-glycoprotein (A1BG).